A 900-amino-acid polypeptide reads, in one-letter code: Bifunctional uridylyltransferase/uridylyl-removing enzyme (900 aa).

The tract at residues 1–342 (MPQVDPELFD…PCEQPVQIQP (342 aa)) is uridylyltransferase. The tract at residues 343-705 (LNSRFQLRDG…TTQREFESGS (363 aa)) is uridylyl-removing. The HD domain maps to 461 to 583 (VDAHTLNLIK…VGDQTHLDYL (123 aa)). 2 ACT domains span residues 706 to 789 (QIFI…IIQR) and 816 to 891 (VLEV…DNGR).

The protein belongs to the GlnD family. Requires Mg(2+) as cofactor.

It carries out the reaction [protein-PII]-L-tyrosine + UTP = [protein-PII]-uridylyl-L-tyrosine + diphosphate. It catalyses the reaction [protein-PII]-uridylyl-L-tyrosine + H2O = [protein-PII]-L-tyrosine + UMP + H(+). Its activity is regulated as follows. Uridylyltransferase (UTase) activity is inhibited by glutamine, while glutamine activates uridylyl-removing (UR) activity. Modifies, by uridylylation and deuridylylation, the PII regulatory proteins (GlnB and homologs), in response to the nitrogen status of the cell that GlnD senses through the glutamine level. Under low glutamine levels, catalyzes the conversion of the PII proteins and UTP to PII-UMP and PPi, while under higher glutamine levels, GlnD hydrolyzes PII-UMP to PII and UMP (deuridylylation). Thus, controls uridylylation state and activity of the PII proteins, and plays an important role in the regulation of nitrogen assimilation and metabolism. The protein is Bifunctional uridylyltransferase/uridylyl-removing enzyme of Pseudomonas aeruginosa (strain LESB58).